Consider the following 280-residue polypeptide: MSTKYESRYASSPQTVKQYDTQELRNEFLIDNLMQNDTINLTYTHYDRYIAGSAVPTSSPLTLETIDPLKSEYFLERRELGIINVGGTGSVTVDGTVYELGLKDALYVGMGNKDVVFASDDASNPAQFYLNSAPAHTNYPTKKVSKAEANKIELGTLETANHRTVNQMIIGGIVTTCQLQMGMTELKTGSVWNTMPAHVHNRRMEVYLYIDIPQDQAVCHFMGEPQETRHIWMQNNQAVISPPWSIHSGSGTSNYTFVWGMAGENLDYNDMDVAKITELR.

4 residues coordinate Zn(2+): histidine 198, histidine 200, glutamate 205, and histidine 247.

Belongs to the KduI family. The cofactor is Zn(2+).

Its subcellular location is the cytoplasm. The enzyme catalyses 5-dehydro-4-deoxy-D-glucuronate = 3-deoxy-D-glycero-2,5-hexodiulosonate. Isomerase involved in ulvan degradation. Ulvan is the main polysaccharide component of the Ulvales (green seaweed) cell wall. It is composed of disaccharide building blocks comprising 3-sulfated rhamnose (Rha3S) linked to D-glucuronic acid (GlcA), L-iduronic acid (IduA), or D-xylose (Xyl). Catalyzes the isomerization of 5-dehydro-4-deoxy-D-glucuronate to 3-deoxy-D-glycero-2,5-hexodiulosonate. This chain is 4-deoxy-L-threo-5-hexosulose-uronate ketol-isomerase, found in Formosa agariphila (strain DSM 15362 / KCTC 12365 / LMG 23005 / KMM 3901 / M-2Alg 35-1).